The chain runs to 899 residues: Valine--tRNA ligase (899 aa).

Residues 58 to 68 carry the 'HIGH' region motif; the sequence is PNVTGVLHIGH. The short motif at 544–548 is the 'KMSKS' region element; that stretch reads KMSKS. Lysine 547 contacts ATP. Residues 836–898 are a coiled coil; sequence GTRLHNQRQK…NAELIALGLQ (63 aa).

This sequence belongs to the class-I aminoacyl-tRNA synthetase family. ValS type 1 subfamily. Monomer.

It is found in the cytoplasm. It carries out the reaction tRNA(Val) + L-valine + ATP = L-valyl-tRNA(Val) + AMP + diphosphate. Its function is as follows. Catalyzes the attachment of valine to tRNA(Val). As ValRS can inadvertently accommodate and process structurally similar amino acids such as threonine, to avoid such errors, it has a 'posttransfer' editing activity that hydrolyzes mischarged Thr-tRNA(Val) in a tRNA-dependent manner. This is Valine--tRNA ligase from Helicobacter hepaticus (strain ATCC 51449 / 3B1).